A 177-amino-acid polypeptide reads, in one-letter code: Co-chaperone protein HscB homolog (177 aa).

The region spanning 8–80 is the J domain; that stretch reads DYFSLFGMPR…LSRAQYLLEL (73 aa).

This sequence belongs to the HscB family. Interacts with HscA and stimulates its ATPase activity.

In terms of biological role, co-chaperone involved in the maturation of iron-sulfur cluster-containing proteins. Seems to help targeting proteins to be folded toward HscA. The protein is Co-chaperone protein HscB homolog of Azoarcus sp. (strain BH72).